The chain runs to 96 residues: Small ribosomal subunit protein bS18 (96 aa).

This sequence belongs to the bacterial ribosomal protein bS18 family. In terms of assembly, part of the 30S ribosomal subunit. Forms a tight heterodimer with protein bS6.

Binds as a heterodimer with protein bS6 to the central domain of the 16S rRNA, where it helps stabilize the platform of the 30S subunit. The polypeptide is Small ribosomal subunit protein bS18 (Gluconobacter oxydans (strain 621H) (Gluconobacter suboxydans)).